The sequence spans 327 residues: Glycolipid sulfotransferase BCG_1434 (327 aa).

40–45 (KSGLTW) serves as a coordination point for 3'-phosphoadenylyl sulfate. The active-site Proton acceptor is the His-97. Residue 116-124 (RDPRDAAVS) participates in 3'-phosphoadenylyl sulfate binding.

This sequence belongs to the sulfotransferase 1 family.

Involved in the synthesis of cell wall sulfolipids. The sequence is that of Glycolipid sulfotransferase BCG_1434 from Mycobacterium bovis (strain BCG / Pasteur 1173P2).